The following is a 784-amino-acid chain: Transcription factor E4F1 (784 aa).

A required for ubiquitin ligase activity region spans residues 41–85 (GFLGLPAPFSEEDEDDVHRCGRCQAEFTALEDFVQHKIQKACQRA). Position 50 is a phosphoserine (serine 50). The mediates dimerization, DNA-binding, transcription repression of CCNA2 and interaction with HMGA2 stretch occupies residues 184-263 (LLVNKDGRYV…GKSFRESGAL (80 aa)). C2H2-type zinc fingers lie at residues 192 to 214 (YVCA…MVTH) and 220 to 242 (HECK…HRRH). Residues 248-272 (YKCSKCGKSFRESGALTRHLKSLTP) form a C2H2-type 3; degenerate zinc finger. Positions 369–566 (NLLHQAMQNS…REKGSLVRHV (198 aa)) are mediates interaction with CDKN2A. 5 C2H2-type zinc fingers span residues 435-457 (HPCP…KRGH), 463-485 (FACA…QEVH), 491-513 (FRCG…RRVH), 519-541 (YPCP…FRTH), and 547-569 (HVCQ…VRHH). The tract at residues 435–599 (HPCPQCSETF…LNRHLRTKGG (165 aa)) is interaction with BMI1. The segment at 521-580 (CPKCGKRYKTKNAQQVHFRTHLEEKPHVCQFCSRGFREKGSLVRHVRHHTGEKPFKCYKC) is mediates interaction with TP53. The C2H2-type 9; degenerate zinc finger occupies 575–597 (FKCYKCGRGFAEHGTLNRHLRTK). Positions 575–597 (FKCYKCGRGFAEHGTLNRHLRTK) are mediates interaction with RASSF1.

As to quaternary structure, homodimer; binds DNA as a dimer. Forms a complex with CDKN2A and TP53. Interactions with TP53, RB1, ANP32A, BMI1 and FHL2 regulate E4F1 activity. Interacts with HDAC1, HMGA2 and RASSF1. In terms of assembly, (Microbial infection) Interacts with HBV protein X. Proteolytic cleavage produces a 50 kDa N-terminal peptide (p50E4F) which has a DNA-binding activity and activates transcription in presence of the adenoviral E1A protein. The major full-length protein (p120E4F) functions as a repressor of transcription. Post-translationally, phosphorylated; p120E4F and p50E4F are both phosphorylated. Phosphorylation is cell cycle-dependent and differentially regulates DNA-binding activity and function of both forms. In terms of processing, may be sumoylated by UBE2I upon interaction with CDKN2A. As to expression, ubiquitously expressed.

The protein resides in the nucleus. The protein localises to the nucleoplasm. It is found in the cytoplasm. It carries out the reaction S-ubiquitinyl-[E2 ubiquitin-conjugating enzyme]-L-cysteine + [acceptor protein]-L-lysine = [E2 ubiquitin-conjugating enzyme]-L-cysteine + N(6)-ubiquitinyl-[acceptor protein]-L-lysine.. It participates in protein modification; protein ubiquitination. May function as a transcriptional repressor. May also function as a ubiquitin ligase mediating ubiquitination of chromatin-associated TP53. Functions in cell survival and proliferation through control of the cell cycle. Functions in the p53 and pRB tumor suppressor pathways and regulates the cyclin CCNA2 transcription. In terms of biological role, identified as a cellular target of the adenoviral oncoprotein E1A, it is required for both transcriptional activation and repression of viral genes. This Homo sapiens (Human) protein is Transcription factor E4F1 (E4F1).